The chain runs to 179 residues: Large ribosomal subunit protein uL5 (179 aa).

It belongs to the universal ribosomal protein uL5 family. Part of the 50S ribosomal subunit; part of the 5S rRNA/L5/L18/L25 subcomplex. Contacts the 5S rRNA and the P site tRNA. Forms a bridge to the 30S subunit in the 70S ribosome.

In terms of biological role, this is one of the proteins that bind and probably mediate the attachment of the 5S RNA into the large ribosomal subunit, where it forms part of the central protuberance. In the 70S ribosome it contacts protein S13 of the 30S subunit (bridge B1b), connecting the 2 subunits; this bridge is implicated in subunit movement. Contacts the P site tRNA; the 5S rRNA and some of its associated proteins might help stabilize positioning of ribosome-bound tRNAs. In Cellvibrio japonicus (strain Ueda107) (Pseudomonas fluorescens subsp. cellulosa), this protein is Large ribosomal subunit protein uL5.